The sequence spans 344 residues: MKAIFVLNAAPKDNTWYAGGKLGWSQYHDTGFYGNGFQNNNGPTRNDQLGAGAFGGYQVNPYLGFEMGYDWLGRMAYKGSVDNGAFKAQGVQLTAKLGYPITDDLDIYTRLGGMVWRADSKGNYASTGVSRSEHDTGVSPVFAGGVEWAVTRDIATRLEYQWVNNIGDAGTVGTRPDNGMLSLGVSYRFGQEDAAPVVAPAPAPAPEVATKHFTLKSDVLFNFNKATLKPEGQQALDQLYTQLSNMDPKDGSAVVLGYTDRIGSEAYNQQLSEKRAQSVVDYLVAKGIPAGKISARGMGESNPVTGNTCDNVKARAALIDCLAPDRRVEIEVKGYKEVVTQPQA.

The Periplasmic portion of the chain corresponds to 1 to 14 (MKAIFVLNAAPKDN). Residues 15–24 (TWYAGGKLGW) traverse the membrane as a beta stranded segment. Topologically, residues 25 to 49 (SQYHDTGFYGNGFQNNNGPTRNDQL) are extracellular. Residues 50 to 59 (GAGAFGGYQV) traverse the membrane as a beta stranded segment. Topologically, residues 60–62 (NPY) are periplasmic. The beta stranded transmembrane segment at 63 to 71 (LGFEMGYDW) threads the bilayer. Residues 72–89 (LGRMAYKGSVDNGAFKAQ) are Extracellular-facing. The beta stranded transmembrane segment at 90-100 (GVQLTAKLGYP) threads the bilayer. Residues 101–104 (ITDD) are Periplasmic-facing. Residues 105-114 (LDIYTRLGGM) form a beta stranded membrane-spanning segment. At 115–139 (VWRADSKGNYASTGVSRSEHDTGVS) the chain is on the extracellular side. A beta stranded transmembrane segment spans residues 140-149 (PVFAGGVEWA). The Periplasmic segment spans residues 150 to 153 (VTRD). Residues 154–162 (IATRLEYQW) traverse the membrane as a beta stranded segment. Over 163–179 (VNNIGDAGTVGTRPDNG) the chain is Extracellular. Residues 180-188 (MLSLGVSYR) form a beta stranded membrane-spanning segment. At 189 to 344 (FGQEDAAPVV…YKEVVTQPQA (156 aa)) the chain is on the periplasmic side. 4 consecutive repeat copies span residues 199 to 200 (AP), 201 to 202 (AP), 203 to 204 (AP), and 205 to 206 (AP). The interval 199-206 (APAPAPAP) is 4 X 2 AA tandem repeats of A-P. The OmpA-like domain occupies 208-336 (VATKHFTLKS…RVEIEVKGYK (129 aa)). The cysteines at positions 309 and 321 are disulfide-linked.

The protein belongs to the outer membrane OOP (TC 1.B.6) superfamily. OmpA family. In terms of assembly, monomer and homodimer.

The protein localises to the cell outer membrane. With TolR probably plays a role in maintaining the position of the peptidoglycan cell wall in the periplasm. Acts as a porin with low permeability that allows slow penetration of small solutes; an internal gate slows down solute passage. Its function is as follows. Required for conjugation with F-type plasmids; probably serves as the mating receptor on recipient cells. The protein is Outer membrane protein A of Klebsiella pneumoniae.